Reading from the N-terminus, the 251-residue chain is E3 ubiquitin-protein ligase Os06g0535400 (251 aa).

The next 3 helical transmembrane spans lie at Val28 to Ala48, Leu102 to Phe122, and Ala127 to Ser147. An RING-type; atypical zinc finger spans residues Cys185 to Arg227.

It localises to the membrane. The enzyme catalyses S-ubiquitinyl-[E2 ubiquitin-conjugating enzyme]-L-cysteine + [acceptor protein]-L-lysine = [E2 ubiquitin-conjugating enzyme]-L-cysteine + N(6)-ubiquitinyl-[acceptor protein]-L-lysine.. It functions in the pathway protein modification; protein ubiquitination. Its function is as follows. Possesses E3 ubiquitin-protein ligase in vitro. In Oryza sativa subsp. japonica (Rice), this protein is E3 ubiquitin-protein ligase Os06g0535400.